Consider the following 275-residue polypeptide: DNA polymerase II subunit B4 (275 aa).

Residues 11–17 (LPLAIVR) mediate DNA binding. Residues 112–122 (ASYPAGGAALK) are compositionally biased toward low complexity. The disordered stretch occupies residues 112–275 (ASYPAGGAAL…EEVESDEEDE (164 aa)). A Nuclear localization signal motif is present at residues 135-142 (KKRKQEEP). Residues 151–161 (SKIDEETKRND) are compositionally biased toward basic and acidic residues. The stretch at 152–179 (KIDEETKRNDEETENDNTEEENGNDEED) forms a coiled coil. Acidic residues-rich tracts occupy residues 162-237 (EETE…EESG) and 266-275 (EEVESDEEDE).

The protein belongs to the NFYB/HAP3 subunit family. In terms of assembly, heterotrimeric transcription factor composed of three components, NF-YA, NF-YB and NF-YC. NF-YB and NF-YC must interact and dimerize for NF-YA association and DNA binding. Binds directly with DPB3-1.

Its subcellular location is the nucleus. In terms of biological role, component of the NF-Y/HAP transcription factor complex. The NF-Y complex stimulates the transcription of various genes by recognizing and binding to a CCAAT motif in promoters. The polypeptide is DNA polymerase II subunit B4 (Arabidopsis thaliana (Mouse-ear cress)).